The sequence spans 406 residues: MDGSHSAALQLQQLPPTSSSSAMSEASFSYKENLIGALLAIFGHLVVSIALNLQKYCHIRLAGSKDPRAYFKTKTWWLGLFLMLLGELGVFASYAFAPLSLIVPLSAVSVIASAIIGIIFIKEKWKPKDFLRRYILSFVGCGLAVVGTYLLVTFAPNSREKMTGENVTRHLVSWPFLLYMLVEIILFCLLLYFYKEKNANNIVVILLLVALLGSMTVVTVKAVAGMLVLSIQGNLQLDYPIFYVMFVCMVATAVYQAAFLSQASQMYDSSLIASVGYILSTTIAITAGAIFYLDFIGEDVLHICMFALGCLIAFLGVFLITRNRKKAIPFEPYISMDAMPGMQNMHDKGMTVQPELKASFSYGALENNDNISEIYAPATLPVMQEEHGSRSASGVPYRVLEHTKKE.

4 helical membrane passes run 33-53, 76-96, 101-121, and 135-155; these read NLIG…ALNL, WWLG…SYAF, LIVP…IIFI, and ILSF…VTFA. A glycan (N-linked (GlcNAc...) asparagine) is linked at N166. 5 helical membrane-spanning segments follow: residues 171-191, 202-222, 240-260, 271-291, and 300-320; these read LVSW…CLLL, IVVI…TVKA, PIFY…AAFL, LIAS…GAIF, and VLHI…VFLI. The residue at position 372 (S372) is a Phosphoserine.

The protein belongs to the NIPA family.

Its subcellular location is the membrane. The protein is NIPA-like protein 3 (NIPAL3) of Pongo abelii (Sumatran orangutan).